The following is a 136-amino-acid chain: Large ribosomal subunit protein uL16 (136 aa).

It belongs to the universal ribosomal protein uL16 family. In terms of assembly, part of the 50S ribosomal subunit.

Binds 23S rRNA and is also seen to make contacts with the A and possibly P site tRNAs. The polypeptide is Large ribosomal subunit protein uL16 (Buchnera aphidicola subsp. Cinara cedri (strain Cc)).